The primary structure comprises 271 residues: 2-dehydro-3-deoxyphosphooctonate aldolase (271 aa).

Belongs to the KdsA family.

The protein resides in the cytoplasm. The enzyme catalyses D-arabinose 5-phosphate + phosphoenolpyruvate + H2O = 3-deoxy-alpha-D-manno-2-octulosonate-8-phosphate + phosphate. Its pathway is carbohydrate biosynthesis; 3-deoxy-D-manno-octulosonate biosynthesis; 3-deoxy-D-manno-octulosonate from D-ribulose 5-phosphate: step 2/3. It functions in the pathway bacterial outer membrane biogenesis; lipopolysaccharide biosynthesis. The polypeptide is 2-dehydro-3-deoxyphosphooctonate aldolase (Campylobacter jejuni subsp. jejuni serotype O:6 (strain 81116 / NCTC 11828)).